The following is a 375-amino-acid chain: Succinyl-diaminopimelate desuccinylase (375 aa).

Histidine 66 contributes to the Zn(2+) binding site. Aspartate 68 is an active-site residue. Aspartate 99 provides a ligand contact to Zn(2+). Glutamate 133 functions as the Proton acceptor in the catalytic mechanism. Zn(2+) is bound by residues glutamate 134, glutamate 162, and histidine 348.

Belongs to the peptidase M20A family. DapE subfamily. Homodimer. Zn(2+) serves as cofactor. Requires Co(2+) as cofactor.

It carries out the reaction N-succinyl-(2S,6S)-2,6-diaminopimelate + H2O = (2S,6S)-2,6-diaminopimelate + succinate. Its pathway is amino-acid biosynthesis; L-lysine biosynthesis via DAP pathway; LL-2,6-diaminopimelate from (S)-tetrahydrodipicolinate (succinylase route): step 3/3. In terms of biological role, catalyzes the hydrolysis of N-succinyl-L,L-diaminopimelic acid (SDAP), forming succinate and LL-2,6-diaminopimelate (DAP), an intermediate involved in the bacterial biosynthesis of lysine and meso-diaminopimelic acid, an essential component of bacterial cell walls. This chain is Succinyl-diaminopimelate desuccinylase, found in Alkalilimnicola ehrlichii (strain ATCC BAA-1101 / DSM 17681 / MLHE-1).